Reading from the N-terminus, the 203-residue chain is Molybdenum cofactor guanylyltransferase (203 aa).

Residues L12–G14, K25, N53, D71, and D101 each bind GTP. A Mg(2+)-binding site is contributed by D101.

The protein belongs to the MobA family. Monomer. It depends on Mg(2+) as a cofactor.

The protein resides in the cytoplasm. The catalysed reaction is Mo-molybdopterin + GTP + H(+) = Mo-molybdopterin guanine dinucleotide + diphosphate. Transfers a GMP moiety from GTP to Mo-molybdopterin (Mo-MPT) cofactor (Moco or molybdenum cofactor) to form Mo-molybdopterin guanine dinucleotide (Mo-MGD) cofactor. The chain is Molybdenum cofactor guanylyltransferase from Cupriavidus metallidurans (strain ATCC 43123 / DSM 2839 / NBRC 102507 / CH34) (Ralstonia metallidurans).